The sequence spans 55 residues: Hirustasin (55 aa).

5 disulfide bridges follow: Cys-6/Cys-17, Cys-11/Cys-22, Cys-24/Cys-44, Cys-29/Cys-48, and Cys-33/Cys-50. Residues 24-50 (CNEVHCRIRCKYGLKKDENGCEYPCSC) form the Antistasin-like domain.

Belongs to the protease inhibitor I15 (antistasin) family.

The protein localises to the secreted. Acts as an inhibitor of tissue kallikrein, trypsin, chymotrypsin and neutrophil cathepsin G. The protein is Hirustasin of Hirudo medicinalis (Medicinal leech).